The chain runs to 508 residues: Photosystem II CP47 reaction center protein (508 aa).

The next 6 helical transmembrane spans lie at 21–36 (SVHI…WAGS), 101–115 (IVFS…IWHW), 140–156 (GIHL…FGAF), 203–218 (IAAG…FHLS), 237–252 (VLSS…AFVV), and 457–472 (SFAL…HGAR).

Belongs to the PsbB/PsbC family. PsbB subfamily. In terms of assembly, PSII is composed of 1 copy each of membrane proteins PsbA, PsbB, PsbC, PsbD, PsbE, PsbF, PsbH, PsbI, PsbJ, PsbK, PsbL, PsbM, PsbT, PsbX, PsbY, PsbZ, Psb30/Ycf12, at least 3 peripheral proteins of the oxygen-evolving complex and a large number of cofactors. It forms dimeric complexes. It depends on Binds multiple chlorophylls. PSII binds additional chlorophylls, carotenoids and specific lipids. as a cofactor.

It localises to the plastid. Its subcellular location is the chloroplast thylakoid membrane. In terms of biological role, one of the components of the core complex of photosystem II (PSII). It binds chlorophyll and helps catalyze the primary light-induced photochemical processes of PSII. PSII is a light-driven water:plastoquinone oxidoreductase, using light energy to abstract electrons from H(2)O, generating O(2) and a proton gradient subsequently used for ATP formation. This chain is Photosystem II CP47 reaction center protein, found in Arabis hirsuta (Hairy rock-cress).